A 688-amino-acid polypeptide reads, in one-letter code: Probable transcription factor gsfR1 (688 aa).

Residues Met-1–Val-16 show a composition bias toward acidic residues. The tract at residues Met-1–Ala-95 is disordered. Residues Arg-24–Arg-36 are compositionally biased toward polar residues. A compositionally biased stretch (basic and acidic residues) spans Glu-58–Pro-75.

It localises to the nucleus. Functionally, probable transcription factor that regulates expression of the gene cluster that mediates the biosynthesis of Griseofulvin, an important antifungal drug that has been in use for a long time for treating dermatophyte infections. The protein is Probable transcription factor gsfR1 of Penicillium aethiopicum.